The following is a 261-amino-acid chain: Receptor expression-enhancing protein 4 (261 aa).

2 consecutive transmembrane segments (helical) span residues 1–21 (MVSWIISRAVVLVFGLLYPAY) and 35–55 (YVRWMMYWIVFALFMTVETFT). The interval 167-261 (YTDALYPDEP…KKPAQSEPEN (95 aa)) is disordered. Residues 221–230 (KSLQRSQSLR) show a composition bias toward polar residues.

It belongs to the DP1 family. In terms of assembly, interacts with microtubules. In terms of tissue distribution, during gastrulation, expressed on the dorsal side of the embryo and then in the neural plate and neural tube. At tailbud stages, expressed in the somites, neural tube and otic vesicle.

The protein localises to the endoplasmic reticulum membrane. In terms of biological role, microtubule-binding protein required to ensure proper cell division and nuclear envelope reassembly by sequestering the endoplasmic reticulum away from chromosomes during mitosis. Probably acts by clearing the endoplasmic reticulum membrane from metaphase chromosomes. May play a role in the maintenance of both the nervous system and the musculature. The polypeptide is Receptor expression-enhancing protein 4 (reep4) (Xenopus laevis (African clawed frog)).